Reading from the N-terminus, the 123-residue chain is Protein HesB, heterocyst (123 aa).

It belongs to the HesB/IscA family.

May be required for efficient nitrogen fixation. This Trichormus variabilis (strain ATCC 29413 / PCC 7937) (Anabaena variabilis) protein is Protein HesB, heterocyst (hesB1).